Consider the following 185-residue polypeptide: dTTP/UTP pyrophosphatase (185 aa).

D67 serves as the catalytic Proton acceptor.

Belongs to the Maf family. YhdE subfamily. A divalent metal cation serves as cofactor.

It localises to the cytoplasm. The enzyme catalyses dTTP + H2O = dTMP + diphosphate + H(+). It catalyses the reaction UTP + H2O = UMP + diphosphate + H(+). In terms of biological role, nucleoside triphosphate pyrophosphatase that hydrolyzes dTTP and UTP. May have a dual role in cell division arrest and in preventing the incorporation of modified nucleotides into cellular nucleic acids. This chain is dTTP/UTP pyrophosphatase, found in Lacticaseibacillus casei (strain BL23) (Lactobacillus casei).